Consider the following 33-residue polypeptide: Omega-conotoxin-like Vn2 (33 aa).

3 disulfide bridges follow: cysteine 3-cysteine 20, cysteine 10-cysteine 24, and cysteine 19-cysteine 28. Proline 33 is subject to Proline amide.

As to expression, expressed by the venom duct.

It localises to the secreted. In terms of biological role, omega-conotoxins act at presynaptic membranes, they bind and block voltage-gated calcium channels (Cav). Has strong insecticidal properties at a dose of only 100 pmol/g of body weight (when injected into the haemocoel of the wax moth G.mellonella larvae). Provoques tremor and uncontrolled movements in insect larvae, that are typical symptoms caused by neurotoxins. On fish G.niger, intraperitoneal injection of the toxin causes full extension of the fins, change in posture, breathing difficulties (at 30 and 100 pmol/g body weight) and death (at 100 pmol/g body weight). This is Omega-conotoxin-like Vn2 from Conus ventricosus (Mediterranean cone).